The sequence spans 61 residues: Sec-independent protein translocase protein TatA (61 aa).

The chain crosses the membrane as a helical span at residues 2–22 (GLSGISPLSLLLILAIIVALF).

Belongs to the TatA/E family. As to quaternary structure, the Tat system comprises two distinct complexes: a TatABC complex, containing multiple copies of TatA, TatB and TatC subunits, and a separate TatA complex, containing only TatA subunits. Substrates initially bind to the TatABC complex, which probably triggers association of the separate TatA complex to form the active translocon.

Its subcellular location is the cell inner membrane. Its function is as follows. Part of the twin-arginine translocation (Tat) system that transports large folded proteins containing a characteristic twin-arginine motif in their signal peptide across membranes. TatA could form the protein-conducting channel of the Tat system. This Legionella pneumophila (strain Paris) protein is Sec-independent protein translocase protein TatA.